Here is a 192-residue protein sequence, read N- to C-terminus: uncharacterized protein (192 aa).

Residues 7-29 form a helical; Signal-anchor membrane-spanning segment; sequence FIHSISGGSSLLSASEVFASAFF. Residues 51 to 67 traverse the membrane as a helical segment; the sequence is YFLCVLVSTFLNSLVII.

The protein localises to the membrane. This is an uncharacterized protein from Saccharomyces cerevisiae (strain ATCC 204508 / S288c) (Baker's yeast).